The sequence spans 119 residues: Large ribosomal subunit protein bL20 (119 aa).

The protein belongs to the bacterial ribosomal protein bL20 family.

In terms of biological role, binds directly to 23S ribosomal RNA and is necessary for the in vitro assembly process of the 50S ribosomal subunit. It is not involved in the protein synthesizing functions of that subunit. The sequence is that of Large ribosomal subunit protein bL20 from Shewanella halifaxensis (strain HAW-EB4).